A 535-amino-acid polypeptide reads, in one-letter code: MRLAFWLYEGTALHGVSRVTNSMKGVHTVYHAPQGDDYITATYTMLERTPEFPKLSISVVRGQDLARGTSRLPGTVEQVAKHYNPELIVVAPSCSTALLQEDLGQMARASGIDENKIMVYAVNPFRVAETEAAEGLFTELVKRFAAEQPKTEKPSVNLLGFTSLGFHLRSNLTSLRRMLKTLGIEVNVVAPWGAGIDDLKKLPAAWVNIAPFRELGCQAAGYLKENFGMPSITEAPLGVNATLRWLRAIIAEVNKIGAEKGMAPIEMPEMRDFSLDGQSAPSGVPWFARTADMESFSNKRAFVFGDATQVVGVTKFLKDELGMKIIGAGTYLPKQADWVREQLEGYLPGELMVTDKFQEVSAFIEEEMPELVCGTQMERHSCRKLDVPCMVISTPTHIENHLLGYYPFFGFDGADVMADRVYTSAKLGLEKHLIDFFGDAGLEYEEEEPEVFTEPAMSGNGTVTSSAEAPAEAAVATATATGELSWTAEAEKMLGKVPFFVRKKVRKNTDNYAREIGEQVITADVFRKAKEHLGG.

Residue D36 coordinates [4Fe-4S] cluster. D292 acts as the Proton donor in catalysis. A substrate-binding site is contributed by 428–429 (GL).

This sequence belongs to the ChlB/BchB/BchZ family. Protochlorophyllide reductase is composed of three subunits; BchL, BchN and BchB. Forms a heterotetramer of two BchB and two BchN subunits. It depends on [4Fe-4S] cluster as a cofactor.

It carries out the reaction chlorophyllide a + oxidized 2[4Fe-4S]-[ferredoxin] + 2 ADP + 2 phosphate = protochlorophyllide a + reduced 2[4Fe-4S]-[ferredoxin] + 2 ATP + 2 H2O. It functions in the pathway porphyrin-containing compound metabolism; bacteriochlorophyll biosynthesis (light-independent). Its function is as follows. Component of the dark-operative protochlorophyllide reductase (DPOR) that uses Mg-ATP and reduced ferredoxin to reduce ring D of protochlorophyllide (Pchlide) to form chlorophyllide a (Chlide). This reaction is light-independent. The NB-protein (BchN-BchB) is the catalytic component of the complex. The polypeptide is Light-independent protochlorophyllide reductase subunit B (Chlorobaculum parvum (strain DSM 263 / NCIMB 8327) (Chlorobium vibrioforme subsp. thiosulfatophilum)).